The sequence spans 181 residues: MAAVVALCRKAMETVKTKEFRDYLASTHFWGPVANWGLPLAAFRDMRASPDIISGRMTTALIFYSMAFMRFAYRVQPRNLLLMACHGTNIVAQSMQAGRYLNYHYGGGTTAATTAAVSAASATSTGSVDSSATSTGSVDSSATSTGSVDSSAATTPAAEDPVAHSNCQEITCCYLVTWDCD.

The next 2 membrane-spanning stretches (helical) occupy residues 23–42 (YLASTHFWGPVANWGLPLAA) and 52–74 (IISGRMTTALIFYSMAFMRFAYR). Residues 125–154 (TGSVDSSATSTGSVDSSATSTGSVDSSAAT) form a disordered region.

Belongs to the mitochondrial pyruvate carrier (MPC) (TC 2.A.105) family.

The protein resides in the mitochondrion inner membrane. Its function is as follows. May mediate the uptake of pyruvate into mitochondria. The chain is Mitochondrial pyruvate carrier-like protein from Bos taurus (Bovine).